Here is a 262-residue protein sequence, read N- to C-terminus: MKAVATVFICGSLVLITYLPLVVTSPQTLAIPEKLRQAVGRVVVNATACSVTCGLGYKEETSCEVGPDGVRRDCRSQRLECLTNWICGMLHFTIIQRQQFELNCLSSDILTKGQEAFRFTWKLARGIISTNDELFKPFRANSPFLRFKPAYESDSGTYRCDVQQLKNLKLVKRLYFGLRVLPPKLVNLNFQQSLTEDQKLAEEGWEVHLDNQSQPHLPGWRKKVSLALGVGIAAGVVGGVLVNVALCRVLGGTGGNGNLSSL.

The N-terminal stretch at 1–30 is a signal peptide; sequence MKAVATVFICGSLVLITYLPLVVTSPQTLA. The Extracellular portion of the chain corresponds to 31–225; that stretch reads IPEKLRQAVG…HLPGWRKKVS (195 aa). Asparagine 45 is a glycosylation site (N-linked (GlcNAc...) asparagine). One can recognise an Ig-like domain in the interval 83-171; the sequence is TNWICGMLHF…VQQLKNLKLV (89 aa). An intrachain disulfide couples cysteine 104 to cysteine 160. Residue asparagine 211 is glycosylated (N-linked (GlcNAc...) asparagine). Residues 226-246 form a helical membrane-spanning segment; that stretch reads LALGVGIAAGVVGGVLVNVAL. Over 247-262 the chain is Cytoplasmic; that stretch reads CRVLGGTGGNGNLSSL.

Forms a complex with IZUMO1 and SPACA6 on spermatocyte cell membrane required for fertilization.

The protein localises to the cell membrane. Essential fertilization factor required for male fertility. Part of a conserved trimeric sperm complex with the essential fertilization factors IZUMO1 and SPACA6 which bridges sperm and oocyte membranes during fertilization by binding to IZUMO1R/JUNO on the oocyte. The sequence is that of Transmembrane protein 81 (Tmem81) from Rattus norvegicus (Rat).